A 363-amino-acid polypeptide reads, in one-letter code: Phosphoserine aminotransferase (363 aa).

L-glutamate is bound at residue arginine 42. Pyridoxal 5'-phosphate is bound by residues 76 to 77 (GR), tryptophan 102, threonine 156, aspartate 175, and glutamine 198. Lysine 199 bears the N6-(pyridoxal phosphate)lysine mark. 240 to 241 (NT) is a binding site for pyridoxal 5'-phosphate.

Belongs to the class-V pyridoxal-phosphate-dependent aminotransferase family. SerC subfamily. As to quaternary structure, homodimer. The cofactor is pyridoxal 5'-phosphate.

It localises to the cytoplasm. It carries out the reaction O-phospho-L-serine + 2-oxoglutarate = 3-phosphooxypyruvate + L-glutamate. The enzyme catalyses 4-(phosphooxy)-L-threonine + 2-oxoglutarate = (R)-3-hydroxy-2-oxo-4-phosphooxybutanoate + L-glutamate. Its pathway is amino-acid biosynthesis; L-serine biosynthesis; L-serine from 3-phospho-D-glycerate: step 2/3. It participates in cofactor biosynthesis; pyridoxine 5'-phosphate biosynthesis; pyridoxine 5'-phosphate from D-erythrose 4-phosphate: step 3/5. Its function is as follows. Catalyzes the reversible conversion of 3-phosphohydroxypyruvate to phosphoserine and of 3-hydroxy-2-oxo-4-phosphonooxybutanoate to phosphohydroxythreonine. The sequence is that of Phosphoserine aminotransferase from Shewanella halifaxensis (strain HAW-EB4).